A 237-amino-acid polypeptide reads, in one-letter code: Concanavalin-Br (237 aa).

Glu8 and Asp10 together coordinate Mn(2+). Ca(2+) is bound by residues Asp10, Tyr12, Asn14, and Asp19. Tyr12 is a binding site for a carbohydrate. The Mn(2+) site is built by Asp19, His24, and Ser34. 99–100 (LY) provides a ligand contact to a carbohydrate. Residue Asp208 coordinates Ca(2+). An a carbohydrate-binding site is contributed by Arg228.

It belongs to the leguminous lectin family. As to quaternary structure, homotetramer.

Glucose/D-mannose specific lectin. Has anti-inflammatory activity in rats. Induces histamine release in mast cells from hamster and rat. Induces lymphocyte proliferation and IFNG production. Shows toxicity against the aquatic snail B.glabrata at concentrations higher than 20 ug/ml. This chain is Concanavalin-Br, found in Canavalia brasiliensis (Brazilian jack bean).